Consider the following 100-residue polypeptide: Large ribosomal subunit protein bL21 (100 aa).

It belongs to the bacterial ribosomal protein bL21 family. In terms of assembly, part of the 50S ribosomal subunit. Contacts protein L20.

In terms of biological role, this protein binds to 23S rRNA in the presence of protein L20. The polypeptide is Large ribosomal subunit protein bL21 (Ureaplasma urealyticum serovar 10 (strain ATCC 33699 / Western)).